Here is a 539-residue protein sequence, read N- to C-terminus: Sorting nexin-27 (539 aa).

Residues 1–40 form a disordered region; that stretch reads MADEDGEGIHPSAPHRNGGGGGGSGLHCAGNGGGGGGGPR. Gly residues predominate over residues 17–39; it reads NGGGGGGSGLHCAGNGGGGGGGP. Residues 41–134 form the PDZ domain; the sequence is VVRIVKSESG…ELILTVLSVP (94 aa). 2 positions are modified to phosphoserine: Ser-49 and Ser-60. Residues 159–267 enclose the PX domain; the sequence is QAVPISVPTY…EFLSESDENY (109 aa). The 90-residue stretch at 271-360 folds into the Ras-associating domain; the sequence is SDVELRVALP…TCLTIRKWLF (90 aa). The FERM-like region F1 stretch occupies residues 271 to 360; that stretch reads SDVELRVALP…TCLTIRKWLF (90 aa). The interval 371-419 is FERM-like region F2; that stretch reads NDLAVTYFFHQAVDDVKKGYIKAEEKSYQLQKLHEQRKMVMYLNMLRTC. Residues 423–523 form an FERM-like region F3 region; the sequence is NEIIFPHCAC…RVFCELKWRK (101 aa).

Core component of the SNX27-retromer, a multiprotein complex composed of SNX27, the WASH complex and the retromer complex. Interacts (via the FERM-like regions) with the WASH complex. Interacts with SNX1. Interacts with CYTIP. Interacts with DGKZ. Interacts with MCC. Interacts (via PDZ domain) with a number of target transmembrane proteins (via PDZ-binding motif): ABCC4, ADRB2, ARHGEF7, GRIA1, GRIA2, GRIN1, GRIN2A GRIN2C, KCNJ6, KCNJ9 and SLC2A1/GLUT1. Interacts (via PDZ domains) with SLC9A3; directs SLC9A3 membrane insertion from early endosomes to the plasma membrane. In terms of tissue distribution, expressed in cells of hematopoietic origin.

The protein resides in the early endosome membrane. It localises to the cytoplasm. The protein localises to the cytosol. Involved in the retrograde transport from endosome to plasma membrane, a trafficking pathway that promotes the recycling of internalized transmembrane proteins. Following internalization, endocytosed transmembrane proteins are delivered to early endosomes and recycled to the plasma membrane instead of being degraded in lysosomes. SNX27 specifically binds and directs sorting of a subset of transmembrane proteins containing a PDZ-binding motif at the C-terminus: following interaction with target transmembrane proteins, associates with the retromer complex, preventing entry into the lysosomal pathway, and promotes retromer-tubule based plasma membrane recycling. SNX27 also binds with the WASH complex. Interacts with membranes containing phosphatidylinositol-3-phosphate (PtdIns(3P)). May participate in establishment of natural killer cell polarity. Recruits CYTIP to early endosomes. The chain is Sorting nexin-27 (Snx27) from Mus musculus (Mouse).